Reading from the N-terminus, the 188-residue chain is Elongation factor P (188 aa).

It belongs to the elongation factor P family.

It localises to the cytoplasm. It participates in protein biosynthesis; polypeptide chain elongation. In terms of biological role, involved in peptide bond synthesis. Stimulates efficient translation and peptide-bond synthesis on native or reconstituted 70S ribosomes in vitro. Probably functions indirectly by altering the affinity of the ribosome for aminoacyl-tRNA, thus increasing their reactivity as acceptors for peptidyl transferase. In Rhodopseudomonas palustris (strain HaA2), this protein is Elongation factor P.